Consider the following 141-residue polypeptide: MAIERTLSIIKPDAVAKNVIGQIYSRFENAGLKIVASRMVHLSRADAEKFYAVHAARPFFKDLVDFMISGPVVVQALEGENAILKHRDLMGATDPKKAEKGTIRADFADSIDANAVHGSDAAETAAVEIAFFFPQVNVYSR.

6 residues coordinate ATP: Lys-11, Phe-59, Arg-87, Thr-93, Arg-104, and Asn-114. The active-site Pros-phosphohistidine intermediate is His-117.

This sequence belongs to the NDK family. Homotetramer. Requires Mg(2+) as cofactor.

The protein resides in the cytoplasm. It carries out the reaction a 2'-deoxyribonucleoside 5'-diphosphate + ATP = a 2'-deoxyribonucleoside 5'-triphosphate + ADP. The enzyme catalyses a ribonucleoside 5'-diphosphate + ATP = a ribonucleoside 5'-triphosphate + ADP. In terms of biological role, major role in the synthesis of nucleoside triphosphates other than ATP. The ATP gamma phosphate is transferred to the NDP beta phosphate via a ping-pong mechanism, using a phosphorylated active-site intermediate. The polypeptide is Nucleoside diphosphate kinase (Paraburkholderia phytofirmans (strain DSM 17436 / LMG 22146 / PsJN) (Burkholderia phytofirmans)).